The sequence spans 352 residues: Ion-translocating oxidoreductase complex subunit D (352 aa).

4 helical membrane-spanning segments follow: residues 20–40 (IMLL…WFFG), 42–62 (GTLF…AIVL), 69–91 (VASH…SIPP), and 123–143 (PAMI…TSWL). Thr-187 bears the FMN phosphoryl threonine mark. The next 5 helical transmembrane spans lie at 215-235 (LAGV…VFLL), 242-262 (WHIP…GWLF), 267-287 (LASP…FFIL), 301-321 (LIFG…GGYP), and 322-342 (DGVA…DYYT).

This sequence belongs to the NqrB/RnfD family. The complex is composed of six subunits: RsxA, RsxB, RsxC, RsxD, RsxE and RsxG. The cofactor is FMN.

The protein resides in the cell inner membrane. In terms of biological role, part of a membrane-bound complex that couples electron transfer with translocation of ions across the membrane. Required to maintain the reduced state of SoxR. The sequence is that of Ion-translocating oxidoreductase complex subunit D from Salmonella paratyphi A (strain ATCC 9150 / SARB42).